We begin with the raw amino-acid sequence, 249 residues long: Triosephosphate isomerase (249 aa).

9–11 contributes to the substrate binding site; it reads NWK. Catalysis depends on H94, which acts as the Electrophile. The Proton acceptor role is filled by E166. Substrate contacts are provided by residues G172, S214, and 235-236; that span reads GG.

It belongs to the triosephosphate isomerase family. Homodimer.

It is found in the cytoplasm. The catalysed reaction is D-glyceraldehyde 3-phosphate = dihydroxyacetone phosphate. It functions in the pathway carbohydrate biosynthesis; gluconeogenesis. The protein operates within carbohydrate degradation; glycolysis; D-glyceraldehyde 3-phosphate from glycerone phosphate: step 1/1. Functionally, involved in the gluconeogenesis. Catalyzes stereospecifically the conversion of dihydroxyacetone phosphate (DHAP) to D-glyceraldehyde-3-phosphate (G3P). The protein is Triosephosphate isomerase of Leptospira biflexa serovar Patoc (strain Patoc 1 / Ames).